The chain runs to 239 residues: tRNA (guanine-N(7)-)-methyltransferase (239 aa).

Residues G64, 87–88 (EI), 120–121 (NA), and L140 each bind S-adenosyl-L-methionine. D143 is a catalytic residue. 218–220 (SEE) is an S-adenosyl-L-methionine binding site.

Belongs to the class I-like SAM-binding methyltransferase superfamily. TrmB family.

It is found in the nucleus. It carries out the reaction guanosine(46) in tRNA + S-adenosyl-L-methionine = N(7)-methylguanosine(46) in tRNA + S-adenosyl-L-homocysteine. It functions in the pathway tRNA modification; N(7)-methylguanine-tRNA biosynthesis. Functionally, catalyzes the formation of N(7)-methylguanine at position 46 (m7G46) in tRNA. This is tRNA (guanine-N(7)-)-methyltransferase from Culex quinquefasciatus (Southern house mosquito).